A 150-amino-acid polypeptide reads, in one-letter code: Transcriptional repressor NrdR (150 aa).

A zinc finger lies at 3–33; that stretch reads CPFCGGESRVLESRPASDEEAVRRRRECLAC. The region spanning 48–138 is the ATP-cone domain; it reads LIVVKKDGRR…VYREFKDLNE (91 aa).

The protein belongs to the NrdR family. Zn(2+) is required as a cofactor.

Functionally, negatively regulates transcription of bacterial ribonucleotide reductase nrd genes and operons by binding to NrdR-boxes. This chain is Transcriptional repressor NrdR, found in Symbiobacterium thermophilum (strain DSM 24528 / JCM 14929 / IAM 14863 / T).